The following is a 204-amino-acid chain: Nascent polypeptide-associated complex subunit alpha (204 aa).

The segment covering 1–19 (MADPRVEELPDEEVPKANV) has biased composition (basic and acidic residues). Disordered regions lie at residues 1–47 (MADP…IHSR) and 118–167 (QLAA…GLEA). The span at 22-32 (AGSDSESEAGE) shows a compositional bias: acidic residues. One can recognise an NAC-A/B domain in the interval 46–111 (SRNEKKARKA…AKIEDLNSQA (66 aa)). Over residues 118 to 128 (QLAAAEAAAGE) the composition is skewed to low complexity. Basic and acidic residues predominate over residues 129–151 (HAGHDHDHDHGKGKAPETEAKKE). Over residues 152–164 (EEEDDGEEVDETG) the composition is skewed to acidic residues. The UBA domain maps to 165–204 (LEAKDIELVMAQANVSRKKAVKALRENDNDIVNSIMALSI).

This sequence belongs to the NAC-alpha family. In terms of assembly, part of the nascent polypeptide-associated complex (NAC), consisting of egd2 and egd1. NAC associates with ribosomes via egd1.

The protein localises to the cytoplasm. It localises to the nucleus. Component of the nascent polypeptide-associated complex (NAC), a dynamic component of the ribosomal exit tunnel, protecting the emerging polypeptides from interaction with other cytoplasmic proteins to ensure appropriate nascent protein targeting. The NAC complex also promotes mitochondrial protein import by enhancing productive ribosome interactions with the outer mitochondrial membrane and blocks the inappropriate interaction of ribosomes translating non-secretory nascent polypeptides with translocation sites in the membrane of the endoplasmic reticulum. Egd2 may also be involved in transcription regulation. This chain is Nascent polypeptide-associated complex subunit alpha (egd2), found in Aspergillus fumigatus (strain ATCC MYA-4609 / CBS 101355 / FGSC A1100 / Af293) (Neosartorya fumigata).